The chain runs to 119 residues: Ribonuclease P protein component (119 aa).

The interval 1–20 (MLPAQHRMTRSTEFGATVSK) is disordered.

The protein belongs to the RnpA family. In terms of assembly, consists of a catalytic RNA component (M1 or rnpB) and a protein subunit.

It carries out the reaction Endonucleolytic cleavage of RNA, removing 5'-extranucleotides from tRNA precursor.. In terms of biological role, RNaseP catalyzes the removal of the 5'-leader sequence from pre-tRNA to produce the mature 5'-terminus. It can also cleave other RNA substrates such as 4.5S RNA. The protein component plays an auxiliary but essential role in vivo by binding to the 5'-leader sequence and broadening the substrate specificity of the ribozyme. The polypeptide is Ribonuclease P protein component (Mycolicibacterium vanbaalenii (strain DSM 7251 / JCM 13017 / BCRC 16820 / KCTC 9966 / NRRL B-24157 / PYR-1) (Mycobacterium vanbaalenii)).